We begin with the raw amino-acid sequence, 185 residues long: MSHLQAHMQRNNKESHSLSPFSQDSQHVTLPVECLEHGQGLELPHYATSGSAGLDLRAALAEEETVVLAPGQRALIPTGLVFHLLPGFEAQIRPRSGLALKHGITCLNTPGTIDSDYRGEIKILLINLGQENFSIQRGMRIAQTVIAPVVQVNVCAIEPDQKDSSQTPSNEGSRGADGFGSTGHD.

Residues 1–23 form a disordered region; it reads MSHLQAHMQRNNKESHSLSPFSQ. Substrate contacts are provided by residues 95–97, N108, 112–114, and K122; these read RSG and TID. The interval 160 to 185 is disordered; the sequence is DQKDSSQTPSNEGSRGADGFGSTGHD. The span at 175–185 shows a compositional bias: gly residues; that stretch reads GADGFGSTGHD.

It belongs to the dUTPase family. The cofactor is Mg(2+).

The enzyme catalyses dUTP + H2O = dUMP + diphosphate + H(+). It participates in pyrimidine metabolism; dUMP biosynthesis; dUMP from dCTP (dUTP route): step 2/2. This enzyme is involved in nucleotide metabolism: it produces dUMP, the immediate precursor of thymidine nucleotides and it decreases the intracellular concentration of dUTP so that uracil cannot be incorporated into DNA. This Bartonella quintana (strain Toulouse) (Rochalimaea quintana) protein is Deoxyuridine 5'-triphosphate nucleotidohydrolase.